Consider the following 309-residue polypeptide: Protein EXORDIUM-like 1 (309 aa).

The signal sequence occupies residues 1 to 23 (MASFVMGYFLLFAVAFMCLDART).

The protein belongs to the EXORDIUM family.

The protein resides in the secreted. It is found in the extracellular space. The protein localises to the apoplast. In terms of biological role, may play a role in a brassinosteroid-dependent regulatory pathway that controls growth and development under low carbon and energy availability. In Arabidopsis thaliana (Mouse-ear cress), this protein is Protein EXORDIUM-like 1 (EXL1).